The primary structure comprises 130 residues: Cyclin-dependent kinase 4 inhibitor B (130 aa).

ANK repeat units lie at residues 5–34 (GSDA…DPNA), 38–66 (FGRR…EPNC), 71–100 (TLTR…RLDV), and 104–130 (WGRL…ATGD). At threonine 12 the chain carries Phosphothreonine.

The protein belongs to the CDKN2 cyclin-dependent kinase inhibitor family. In terms of assembly, heterodimer of CDKN2B with CDK4 or CDK6. In terms of tissue distribution, expression abundant in lung, less abundant in testis, barely detectable in liver, and not detectable in neonatal kidney, adult kidney, brain, heart, or spleen.

Interacts strongly with CDK4 and CDK6. Potent inhibitor. Potential effector of TGF-beta induced cell cycle arrest. This is Cyclin-dependent kinase 4 inhibitor B (Cdkn2b) from Rattus norvegicus (Rat).